Here is a 153-residue protein sequence, read N- to C-terminus: Endoribonuclease YbeY (153 aa).

Residues His114, His118, and His124 each coordinate Zn(2+).

The protein belongs to the endoribonuclease YbeY family. Zn(2+) serves as cofactor.

Its subcellular location is the cytoplasm. Its function is as follows. Single strand-specific metallo-endoribonuclease involved in late-stage 70S ribosome quality control and in maturation of the 3' terminus of the 16S rRNA. This is Endoribonuclease YbeY from Nitrosococcus oceani (strain ATCC 19707 / BCRC 17464 / JCM 30415 / NCIMB 11848 / C-107).